Reading from the N-terminus, the 64-residue chain is Conotoxin Pu3.4 (64 aa).

Residues 1–16 (LGVLLPICLLLFPLTA) form the signal peptide. A propeptide spanning residues 17–49 (LPLDGDQPADRPAERMQDDFITEQHPLFDPVKR) is cleaved from the precursor. Cystine bridges form between Cys-50-Cys-63, Cys-51-Cys-59, and Cys-55-Cys-62. Pro-61 carries the 4-hydroxyproline modification.

It belongs to the conotoxin M superfamily. Expressed by the venom duct.

It localises to the secreted. The protein is Conotoxin Pu3.4 of Conus pulicarius (Flea-bitten cone).